A 344-amino-acid chain; its full sequence is MNVIGIESSCDDTAIAIVNSNREIIANVVISQYTEHLPYSGVVPEIAARAHLKNLQYAMKETLNQAKINFTDIDVIAATSGPGLIGGIIVGSVFGQAIACALGKDFIAVNHLEGHILAVRLNENISFPYLVLLVSGGHCQFIAVLGVGKYKILGQTIDDAVGEAFDKTARLLKLGYPGGPIIEKLASKGDPHKYSLPLSMTKKSGCDLSFSGLKTAVKQLIFSIESLSEKVICDICASFQYTVVQILLCRSINAIKLFESYCSNNFKINRKNYFVISGGVAANQYLRQEIFNLANTYGYCGVAPPSNLCTDNAAMIAWAGIERLNANLFSSNFVPRAKWSVEEL.

Residues H111 and H115 each contribute to the Fe cation site. Residues 133 to 137 (LVSGG), D166, G179, and N283 each bind substrate. Residue D311 coordinates Fe cation.

Belongs to the KAE1 / TsaD family. It depends on Fe(2+) as a cofactor.

It is found in the cytoplasm. The catalysed reaction is L-threonylcarbamoyladenylate + adenosine(37) in tRNA = N(6)-L-threonylcarbamoyladenosine(37) in tRNA + AMP + H(+). Required for the formation of a threonylcarbamoyl group on adenosine at position 37 (t(6)A37) in tRNAs that read codons beginning with adenine. Is involved in the transfer of the threonylcarbamoyl moiety of threonylcarbamoyl-AMP (TC-AMP) to the N6 group of A37, together with TsaE and TsaB. TsaD likely plays a direct catalytic role in this reaction. In Orientia tsutsugamushi (strain Boryong) (Rickettsia tsutsugamushi), this protein is tRNA N6-adenosine threonylcarbamoyltransferase.